The following is a 167-amino-acid chain: Transcription initiation factor TFIID subunit 10 (167 aa).

2 disordered regions span residues 1-56 (MASD…EESE) and 119-139 (TTNI…NPKD). The span at 41–56 (EQPDVEEVPLTTEESE) shows a compositional bias: acidic residues. Residues 130-139 (SSKDKKNPKD) show a composition bias toward basic and acidic residues.

It belongs to the TAF10 family. Belongs to the TFIID complex which is composed of TATA binding protein (Tbp) and a number of TBP-associated factors (TAFs). Also a member of the histone acetylase (HAT) complex. In terms of tissue distribution, at embryonic stage 9, highest expression is detected within the ectoderm, ventral chord, and anterior foregut primordium. Later in development preferential expression is in the foregut, proventriculus, and central nervous system. Coexpressed with Taf10b in the lateral epidermis and anal plate.

It is found in the cytoplasm. Its subcellular location is the nucleus. TFIID is a multimeric protein complex that plays a central role in mediating promoter responses to various activators and repressors. The sequence is that of Transcription initiation factor TFIID subunit 10 from Drosophila melanogaster (Fruit fly).